The chain runs to 126 residues: MADLAKLVDDLSSLTVLEAAELAKMLEEKWGVSAAAAVAVAAGPAAGGAAAPAVEEKTEFTVVLAGAGDKKIEVIKEVRAITGLGLKEAKDLVEGAPKPVKESVAKDEAEKIKAQLEKAGAKVELK.

The protein belongs to the bacterial ribosomal protein bL12 family. In terms of assembly, homodimer. Part of the ribosomal stalk of the 50S ribosomal subunit. Forms a multimeric L10(L12)X complex, where L10 forms an elongated spine to which 2 to 4 L12 dimers bind in a sequential fashion. Binds GTP-bound translation factors.

Forms part of the ribosomal stalk which helps the ribosome interact with GTP-bound translation factors. Is thus essential for accurate translation. This is Large ribosomal subunit protein bL12 from Methylobacterium nodulans (strain LMG 21967 / CNCM I-2342 / ORS 2060).